The sequence spans 367 residues: Pre-small/secreted glycoprotein (367 aa).

The signal sequence occupies residues 1–33 (MGSGYQLLQLPRERFRKTSFLVWVIILFQRAIS). The N-linked (GlcNAc...) asparagine; by host glycan is linked to asparagine 41. Cystine bridges form between cysteine 109–cysteine 136 and cysteine 122–cysteine 148. Asparagine 205, asparagine 229, asparagine 239, asparagine 258, and asparagine 269 each carry an N-linked (GlcNAc...) asparagine; by host glycan.

Belongs to the filoviruses glycoprotein family. Homodimer; disulfide-linked. The homodimers are linked by two disulfide bonds in a parallel orientation. In terms of assembly, monomer. In terms of processing, this precursor is processed into mature sGP and delta-peptide by host furin or furin-like proteases. The cleavage site corresponds to the furin optimal cleavage sequence [KR]-X-[KR]-R. N-glycosylated. Post-translationally, O-glycosylated.

The protein localises to the secreted. Seems to possess an anti-inflammatory activity as it can reverse the barrier-decreasing effects of TNF alpha. Might therefore contribute to the lack of inflammatory reaction seen during infection in spite the of extensive necrosis and massive virus production. Does not seem to be involved in activation of primary macrophages. Does not seem to interact specifically with neutrophils. Its function is as follows. Viroporin that permeabilizes mammalian cell plasma membranes. It acts by altering permeation of ionic compounds and small molecules. This activity may lead to viral enterotoxic activity. This chain is Pre-small/secreted glycoprotein (GP), found in Epomops franqueti (Franquet's epauletted fruit bat).